A 149-amino-acid chain; its full sequence is 3-hydroxyacyl-[acyl-carrier-protein] dehydratase FabZ (149 aa).

His-48 is an active-site residue.

This sequence belongs to the thioester dehydratase family. FabZ subfamily.

Its subcellular location is the cytoplasm. The enzyme catalyses a (3R)-hydroxyacyl-[ACP] = a (2E)-enoyl-[ACP] + H2O. In terms of biological role, involved in unsaturated fatty acids biosynthesis. Catalyzes the dehydration of short chain beta-hydroxyacyl-ACPs and long chain saturated and unsaturated beta-hydroxyacyl-ACPs. This chain is 3-hydroxyacyl-[acyl-carrier-protein] dehydratase FabZ, found in Thermomicrobium roseum (strain ATCC 27502 / DSM 5159 / P-2).